Reading from the N-terminus, the 353-residue chain is tRNA-cytidine(32) 2-sulfurtransferase (353 aa).

Positions 49 to 54 match the PP-loop motif motif; sequence SGGKDS. [4Fe-4S] cluster-binding residues include Cys124, Cys127, and Cys215.

The protein belongs to the TtcA family. In terms of assembly, homodimer. Requires Mg(2+) as cofactor. It depends on [4Fe-4S] cluster as a cofactor.

The protein localises to the cytoplasm. The catalysed reaction is cytidine(32) in tRNA + S-sulfanyl-L-cysteinyl-[cysteine desulfurase] + AH2 + ATP = 2-thiocytidine(32) in tRNA + L-cysteinyl-[cysteine desulfurase] + A + AMP + diphosphate + H(+). It functions in the pathway tRNA modification. Functionally, catalyzes the ATP-dependent 2-thiolation of cytidine in position 32 of tRNA, to form 2-thiocytidine (s(2)C32). The sulfur atoms are provided by the cysteine/cysteine desulfurase (IscS) system. This is tRNA-cytidine(32) 2-sulfurtransferase from Sodalis glossinidius (strain morsitans).